The primary structure comprises 510 residues: Putative serine protease K12H4.7 (510 aa).

Residues 1-19 (MKTLLAVLLAACVLTQVLS) form the signal peptide. The active-site Charge relay system is serine 187. The N-linked (GlcNAc...) asparagine glycan is linked to asparagine 234. The Charge relay system role is filled by aspartate 452. Asparagine 473 is a glycosylation site (N-linked (GlcNAc...) asparagine). Catalysis depends on histidine 477, which acts as the Charge relay system.

The protein belongs to the peptidase S28 family.

The protein is Putative serine protease K12H4.7 of Caenorhabditis elegans.